We begin with the raw amino-acid sequence, 208 residues long: Uracil phosphoribosyltransferase (208 aa).

5-phospho-alpha-D-ribose 1-diphosphate-binding positions include Arg-78, Arg-103, and 130 to 138 (DPMLATGGS). Residues Ile-193 and 198 to 200 (GDA) each bind uracil. A 5-phospho-alpha-D-ribose 1-diphosphate-binding site is contributed by Asp-199.

It belongs to the UPRTase family. It depends on Mg(2+) as a cofactor.

It catalyses the reaction UMP + diphosphate = 5-phospho-alpha-D-ribose 1-diphosphate + uracil. It participates in pyrimidine metabolism; UMP biosynthesis via salvage pathway; UMP from uracil: step 1/1. Allosterically activated by GTP. Its function is as follows. Catalyzes the conversion of uracil and 5-phospho-alpha-D-ribose 1-diphosphate (PRPP) to UMP and diphosphate. The polypeptide is Uracil phosphoribosyltransferase (Psychromonas ingrahamii (strain DSM 17664 / CCUG 51855 / 37)).